Here is a 291-residue protein sequence, read N- to C-terminus: MSSDPDKMMSKADKMTKLTLTRWSADWRGATELYEQAANGFRASNKYEKAKVALEKASKGQEMQASPWDAAKHMESAAALAQKLSIWNEVADFYRKASELYVECGRAQPASDALGKAARALEDVKPDDAIQLYTDACEILEEDGRDQMAFDLYRACANVYIKLEKFTDAATFFLRLGVAADKCDATNSQCKAYLSAIILYLYAHDLQQAEKCYNDCSQIDAFLKSDQSRSASRLLTAYNEGDIEEIKKVASASTVSNLDHMIIKLARKLPTGDVTAIQMNTNDDLDEDDLT.

Belongs to the SNAP family.

Its subcellular location is the membrane. Required for vesicular transport between the endoplasmic reticulum and the Golgi apparatus. Binds to SNARE complex and then recruits NSF to disassemble it. This is Gamma-soluble NSF attachment protein (GSNAP) from Arabidopsis thaliana (Mouse-ear cress).